A 341-amino-acid chain; its full sequence is MINLQNVSKIYRSKHGDVNAVQDVTLTIKKGEIFGIIGYSGAGKSSLIRLLNGLEQPTSGTVEVAGRKISEIKGKKLRKARQEISMIFQHFNLLWSRTVRDNIAFPLEIAGVSKAKRLERVAELIKLVGLEGKENAYPSQLSGGQKQRVGIARALANNPKVLLCDEATSALDPQTTDSILGLLSDINERLGLTIVLITHEMHVIRKICHRVAVMENGKVVEEGDVLNVFIKPKEEMTKRFVQQVTEPVETKETLKHFLEETTSGRTIKLTFVGEAAESPLITQIIRKFDVEVNILQGKISQTQDGAYGSLFIHVDGRENEVNDVVDFIKSRQVEAEVITNV.

In terms of domain architecture, ABC transporter spans 2 to 241 (INLQNVSKIY…PKEEMTKRFV (240 aa)). 38–45 (GYSGAGKS) contacts ATP.

Belongs to the ABC transporter superfamily. Methionine importer (TC 3.A.1.24) family. In terms of assembly, the complex is composed of two ATP-binding proteins (MetN), two transmembrane proteins (MetI) and a solute-binding protein (MetQ).

Its subcellular location is the cell membrane. The catalysed reaction is L-methionine(out) + ATP + H2O = L-methionine(in) + ADP + phosphate + H(+). It catalyses the reaction D-methionine(out) + ATP + H2O = D-methionine(in) + ADP + phosphate + H(+). In terms of biological role, part of the ABC transporter complex MetNIQ involved in methionine import. Responsible for energy coupling to the transport system. The protein is Methionine import ATP-binding protein MetN 2 of Bacillus licheniformis (strain ATCC 14580 / DSM 13 / JCM 2505 / CCUG 7422 / NBRC 12200 / NCIMB 9375 / NCTC 10341 / NRRL NRS-1264 / Gibson 46).